A 464-amino-acid polypeptide reads, in one-letter code: Soluble pyridine nucleotide transhydrogenase (464 aa).

35–44 is a binding site for FAD; the sequence is DSRRQVGGNC.

Belongs to the class-I pyridine nucleotide-disulfide oxidoreductase family. It depends on FAD as a cofactor.

It is found in the cytoplasm. The catalysed reaction is NAD(+) + NADPH = NADH + NADP(+). Its function is as follows. Conversion of NADPH, generated by peripheral catabolic pathways, to NADH, which can enter the respiratory chain for energy generation. The sequence is that of Soluble pyridine nucleotide transhydrogenase from Pseudomonas entomophila (strain L48).